The following is a 379-amino-acid chain: Succinyl-diaminopimelate desuccinylase (379 aa).

His-70 contributes to the Zn(2+) binding site. Residue Asp-72 is part of the active site. Residue Asp-103 participates in Zn(2+) binding. The active-site Proton acceptor is Glu-137. Zn(2+) is bound by residues Glu-138, Glu-166, and His-352.

The protein belongs to the peptidase M20A family. DapE subfamily. As to quaternary structure, homodimer. Zn(2+) is required as a cofactor. Requires Co(2+) as cofactor.

The catalysed reaction is N-succinyl-(2S,6S)-2,6-diaminopimelate + H2O = (2S,6S)-2,6-diaminopimelate + succinate. It functions in the pathway amino-acid biosynthesis; L-lysine biosynthesis via DAP pathway; LL-2,6-diaminopimelate from (S)-tetrahydrodipicolinate (succinylase route): step 3/3. In terms of biological role, catalyzes the hydrolysis of N-succinyl-L,L-diaminopimelic acid (SDAP), forming succinate and LL-2,6-diaminopimelate (DAP), an intermediate involved in the bacterial biosynthesis of lysine and meso-diaminopimelic acid, an essential component of bacterial cell walls. The protein is Succinyl-diaminopimelate desuccinylase of Burkholderia mallei (strain NCTC 10247).